The following is a 117-amino-acid chain: Large ribosomal subunit protein bL20c (117 aa).

This sequence belongs to the bacterial ribosomal protein bL20 family.

It is found in the plastid. The protein resides in the chloroplast. Functionally, binds directly to 23S ribosomal RNA and is necessary for the in vitro assembly process of the 50S ribosomal subunit. It is not involved in the protein synthesizing functions of that subunit. The polypeptide is Large ribosomal subunit protein bL20c (Olimarabidopsis pumila (Dwarf rocket)).